Reading from the N-terminus, the 76-residue chain is Acyl carrier protein (76 aa).

One can recognise a Carrier domain in the interval 1 to 76 (MSLEEKVKNI…DVIEYIKAHT (76 aa)). S36 bears the O-(pantetheine 4'-phosphoryl)serine mark.

Belongs to the acyl carrier protein (ACP) family. 4'-phosphopantetheine is transferred from CoA to a specific serine of apo-ACP by AcpS. This modification is essential for activity because fatty acids are bound in thioester linkage to the sulfhydryl of the prosthetic group.

Its subcellular location is the cytoplasm. Its pathway is lipid metabolism; fatty acid biosynthesis. Carrier of the growing fatty acid chain in fatty acid biosynthesis. The chain is Acyl carrier protein from Desulfatibacillum aliphaticivorans.